Reading from the N-terminus, the 121-residue chain is Phosphoribosyl-AMP cyclohydrolase (121 aa).

Aspartate 76 is a binding site for Mg(2+). Cysteine 77 provides a ligand contact to Zn(2+). Mg(2+)-binding residues include aspartate 78 and aspartate 80. Positions 93 and 100 each coordinate Zn(2+).

It belongs to the PRA-CH family. As to quaternary structure, homodimer. Mg(2+) serves as cofactor. Zn(2+) is required as a cofactor.

Its subcellular location is the cytoplasm. It carries out the reaction 1-(5-phospho-beta-D-ribosyl)-5'-AMP + H2O = 1-(5-phospho-beta-D-ribosyl)-5-[(5-phospho-beta-D-ribosylamino)methylideneamino]imidazole-4-carboxamide. Its pathway is amino-acid biosynthesis; L-histidine biosynthesis; L-histidine from 5-phospho-alpha-D-ribose 1-diphosphate: step 3/9. In terms of biological role, catalyzes the hydrolysis of the adenine ring of phosphoribosyl-AMP. The protein is Phosphoribosyl-AMP cyclohydrolase of Methanococcoides burtonii (strain DSM 6242 / NBRC 107633 / OCM 468 / ACE-M).